The primary structure comprises 358 residues: Heme A synthase (358 aa).

A run of 8 helical transmembrane segments spans residues 22–42, 107–127, 133–153, 172–192, 208–228, 269–289, 302–322, and 324–344; these read IQVWLYSILLLCLAIVLVGGA, VLGRLVGLVALLGLIWFWAIK, VLLQLIIVPILIAFQGVVGWW, LAFHLITACFVIIFVTYLSQG, FAGWLVVLILIEVYFGALVAG, FVHRFFAYILFFVAIIHAFYV, AFFICVMIAVQALLGIITLLQ, and VPISLGLIHQSVALAILCFSV. Histidine 271 is a binding site for heme. Histidine 332 provides a ligand contact to heme.

This sequence belongs to the COX15/CtaA family. Type 2 subfamily. In terms of assembly, interacts with CtaB. Heme b is required as a cofactor.

The protein resides in the cell membrane. The catalysed reaction is Fe(II)-heme o + 2 A + H2O = Fe(II)-heme a + 2 AH2. It functions in the pathway porphyrin-containing compound metabolism; heme A biosynthesis; heme A from heme O: step 1/1. Catalyzes the conversion of heme O to heme A by two successive hydroxylations of the methyl group at C8. The first hydroxylation forms heme I, the second hydroxylation results in an unstable dihydroxymethyl group, which spontaneously dehydrates, resulting in the formyl group of heme A. This Bartonella henselae (strain ATCC 49882 / DSM 28221 / CCUG 30454 / Houston 1) (Rochalimaea henselae) protein is Heme A synthase.